Reading from the N-terminus, the 1366-residue chain is DNA-directed RNA polymerase subunit beta (1366 aa).

It belongs to the RNA polymerase beta chain family. As to quaternary structure, the RNAP catalytic core consists of 2 alpha, 1 beta, 1 beta' and 1 omega subunit. When a sigma factor is associated with the core the holoenzyme is formed, which can initiate transcription.

The enzyme catalyses RNA(n) + a ribonucleoside 5'-triphosphate = RNA(n+1) + diphosphate. DNA-dependent RNA polymerase catalyzes the transcription of DNA into RNA using the four ribonucleoside triphosphates as substrates. This chain is DNA-directed RNA polymerase subunit beta, found in Marinomonas sp. (strain MWYL1).